A 556-amino-acid polypeptide reads, in one-letter code: Secreted lipase 4 (556 aa).

The signal sequence occupies residues 1-21 (MKLLTNIGTLLALSPVQQVSA). Asparagine 46, asparagine 263, asparagine 305, asparagine 411, and asparagine 453 each carry an N-linked (GlcNAc...) asparagine glycan.

It belongs to the type-B carboxylesterase/lipase family.

The protein localises to the secreted. The catalysed reaction is a carboxylic ester + H2O = an alcohol + a carboxylate + H(+). Functionally, secreted lipase involved in plant virulence. Has a substrate preference for p-nitrophenyl esters with a carbon chain length of C12 (p-nitrophenyl laureate). This chain is Secreted lipase 4, found in Gibberella zeae (strain ATCC MYA-4620 / CBS 123657 / FGSC 9075 / NRRL 31084 / PH-1) (Wheat head blight fungus).